A 454-amino-acid polypeptide reads, in one-letter code: tRNA modification GTPase MnmE (454 aa).

3 residues coordinate (6S)-5-formyl-5,6,7,8-tetrahydrofolate: R23, E80, and K120. Residues 216 to 377 (GMKVVIAGKP…LRTHLKQSMG (162 aa)) form the TrmE-type G domain. N226 provides a ligand contact to K(+). Residues 226 to 231 (NAGKSS), 245 to 251 (TAIAGTT), 270 to 273 (DTAG), and 335 to 338 (NKAD) contribute to the GTP site. S230 contacts Mg(2+). 3 residues coordinate K(+): T245, I247, and T250. T251 is a Mg(2+) binding site. A (6S)-5-formyl-5,6,7,8-tetrahydrofolate-binding site is contributed by K454.

It belongs to the TRAFAC class TrmE-Era-EngA-EngB-Septin-like GTPase superfamily. TrmE GTPase family. Homodimer. Heterotetramer of two MnmE and two MnmG subunits. K(+) is required as a cofactor.

Its subcellular location is the cytoplasm. Functionally, exhibits a very high intrinsic GTPase hydrolysis rate. Involved in the addition of a carboxymethylaminomethyl (cmnm) group at the wobble position (U34) of certain tRNAs, forming tRNA-cmnm(5)s(2)U34. This Sodalis glossinidius (strain morsitans) protein is tRNA modification GTPase MnmE.